We begin with the raw amino-acid sequence, 507 residues long: ATP synthase subunit alpha, chloroplastic (507 aa).

170–177 serves as a coordination point for ATP; sequence GDRQTGKT.

This sequence belongs to the ATPase alpha/beta chains family. In terms of assembly, F-type ATPases have 2 components, CF(1) - the catalytic core - and CF(0) - the membrane proton channel. CF(1) has five subunits: alpha(3), beta(3), gamma(1), delta(1), epsilon(1). CF(0) has four main subunits: a, b, b' and c.

It is found in the plastid. It localises to the chloroplast thylakoid membrane. The enzyme catalyses ATP + H2O + 4 H(+)(in) = ADP + phosphate + 5 H(+)(out). Its function is as follows. Produces ATP from ADP in the presence of a proton gradient across the membrane. The alpha chain is a regulatory subunit. The protein is ATP synthase subunit alpha, chloroplastic of Citrus sinensis (Sweet orange).